The primary structure comprises 487 residues: MAKIEKKQAVKNNQVLSLAEKIKRKALEKQQQAHANEPSPSDEDSAQSNSKDSNSNEQPEESEEIFESFTELDLVPELIEACKNLNYNKPTPIQSKAIPPALKGSDIIGLAQTGSGKTAAFAIPILNQLWHDQQPYYACILAPTRELAQQIKETFDSLGSLMGVRSTCIVGGMSMMDQARDLMRKPHIIIATPGRLMDHLENTKGFNLRKLKYLVMDEADRLLDMEFGPVLDRILNIIPTQGRTTYLFSATMTSKIDKLQRASLTNPVKCAVSNKYQTVDTLVQTLMVVPGGLKNTFLIYLLNEFIGKSTIVFTRTKANAERISNLCNLLEFSATALHGDLNQNQRTGALDLFKAGKRSILVATDVAARGLDIPSVDIVINYDIPVDSKSYIHRVGRTARAGRSGKSISLVSQYDLELILRIEDVLGKKLPKENVDKDAILALRDSVDKANGEVVMELNRRNKEKQARGKGRRGRMATRDNMDREER.

The disordered stretch occupies residues 22-67 (IKRKALEKQQQAHANEPSPSDEDSAQSNSKDSNSNEQPEESEEIFE). A Q motif motif is present at residues 67–95 (ESFTELDLVPELIEACKNLNYNKPTPIQS). The Helicase ATP-binding domain maps to 98-270 (IPPALKGSDI…RASLTNPVKC (173 aa)). 111–118 (AQTGSGKT) contacts ATP. Positions 217-220 (DEAD) match the DEAD box motif. The Helicase C-terminal domain occupies 298-442 (LIYLLNEFIG…ENVDKDAILA (145 aa)). The interval 459 to 487 (NRRNKEKQARGKGRRGRMATRDNMDREER) is disordered. Residues 477–487 (ATRDNMDREER) show a composition bias toward basic and acidic residues.

It belongs to the DEAD box helicase family. DDX47/RRP3 subfamily. In terms of assembly, interacts with the SSU processome.

The protein resides in the nucleus. The catalysed reaction is ATP + H2O = ADP + phosphate + H(+). In terms of biological role, ATP-dependent rRNA helicase required for pre-ribosomal RNA processing. Involved in the maturation of the 35S-pre-rRNA and to its cleavage to mature 18S rRNA. The sequence is that of ATP-dependent rRNA helicase RRP3 from Kluyveromyces lactis (strain ATCC 8585 / CBS 2359 / DSM 70799 / NBRC 1267 / NRRL Y-1140 / WM37) (Yeast).